Consider the following 119-residue polypeptide: Large ribosomal subunit protein uL14 (119 aa).

It belongs to the universal ribosomal protein uL14 family. As to quaternary structure, part of the 50S ribosomal subunit. Forms a cluster with proteins L3 and L19. In the 70S ribosome, L14 and L19 interact and together make contacts with the 16S rRNA in bridges B5 and B8.

Binds to 23S rRNA. Forms part of two intersubunit bridges in the 70S ribosome. This chain is Large ribosomal subunit protein uL14, found in Ehrlichia chaffeensis (strain ATCC CRL-10679 / Arkansas).